A 750-amino-acid chain; its full sequence is Photosystem I P700 chlorophyll a apoprotein A1 (750 aa).

The next 8 helical transmembrane spans lie at 70-93 (VFSA…FHGA), 156-179 (LYCT…FHYH), 195-219 (LNHH…HVSL), 291-309 (IIHH…GHMY), 346-369 (WHAQ…HHMY), 385-411 (LSLF…IFMV), 433-455 (AIIS…LYIH), and 531-549 (FLVH…LILL). [4Fe-4S] cluster-binding residues include cysteine 573 and cysteine 582. 2 helical membrane-spanning segments follow: residues 589 to 610 (HVFL…HFSW) and 664 to 686 (LSAY…MFLF). Histidine 675 contributes to the chlorophyll a' binding site. Chlorophyll a is bound by residues methionine 683 and tyrosine 691. Tryptophan 692 is a phylloquinone binding site. A helical membrane pass occupies residues 724–744 (AVGVTHYLLGGIATTWAFFLA).

This sequence belongs to the PsaA/PsaB family. As to quaternary structure, the PsaA/B heterodimer binds the P700 chlorophyll special pair and subsequent electron acceptors. PSI consists of a core antenna complex that captures photons, and an electron transfer chain that converts photonic excitation into a charge separation. The eukaryotic PSI reaction center is composed of at least 11 subunits. It depends on P700 is a chlorophyll a/chlorophyll a' dimer, A0 is one or more chlorophyll a, A1 is one or both phylloquinones and FX is a shared 4Fe-4S iron-sulfur center. as a cofactor.

The protein localises to the plastid. It is found in the chloroplast thylakoid membrane. It catalyses the reaction reduced [plastocyanin] + hnu + oxidized [2Fe-2S]-[ferredoxin] = oxidized [plastocyanin] + reduced [2Fe-2S]-[ferredoxin]. In terms of biological role, psaA and PsaB bind P700, the primary electron donor of photosystem I (PSI), as well as the electron acceptors A0, A1 and FX. PSI is a plastocyanin-ferredoxin oxidoreductase, converting photonic excitation into a charge separation, which transfers an electron from the donor P700 chlorophyll pair to the spectroscopically characterized acceptors A0, A1, FX, FA and FB in turn. Oxidized P700 is reduced on the lumenal side of the thylakoid membrane by plastocyanin. The chain is Photosystem I P700 chlorophyll a apoprotein A1 from Phaseolus vulgaris (Kidney bean).